A 535-amino-acid polypeptide reads, in one-letter code: Dimethylaniline monooxygenase [N-oxide-forming] 2 (535 aa).

A2 carries the post-translational modification N-acetylalanine. Residues 9-13 (GAGVS), E32, 40-41 (LW), and 61-62 (NT) each bind FAD. NADP(+)-binding positions include 60–61 (TN) and 195–198 (SASD). K492 participates in a covalent cross-link: Glycyl lysine isopeptide (Lys-Gly) (interchain with G-Cter in SUMO). A helical membrane pass occupies residues 510–530 (LSASFLMKILALVAVFVAFFS).

It belongs to the FMO family. FAD serves as cofactor. The cofactor is Mg(2+). Lung.

Its subcellular location is the microsome membrane. It localises to the endoplasmic reticulum membrane. Catalyzes the oxidative metabolism of numerous xenobiotics, including mainly therapeutic drugs and insecticides that contain a soft nucleophile, most commonly nitrogen and sulfur and participates to their bioactivation. This Cavia porcellus (Guinea pig) protein is Dimethylaniline monooxygenase [N-oxide-forming] 2.